The chain runs to 217 residues: MAAGSRTSLLLAFALLCLPWLQEAGAVQTVPLSRLFDHAMLQAHRAHQLAIDTYQEFEETYIPKDQKYSFLHDSQTSFCFSDSIPTPSNMEETQQKSNLELLRISLLLIESWLEPVRFLRSMFANNLVYDTSDSDDYHLLKDLEEGIQTLMGRLEDGSRRTGQILKQTYSKFDTNSHNHDALLKNYGLLYCFRKDMDKVETFLRMVQCRSVEGSCGF.

The signal sequence occupies residues 1–26 (MAAGSRTSLLLAFALLCLPWLQEAGA). A Zn(2+)-binding site is contributed by H44. C79 and C191 form a disulfide bridge. E200 contributes to the Zn(2+) binding site. An intrachain disulfide couples C208 to C215.

The protein belongs to the somatotropin/prolactin family. As to quaternary structure, can be found in a monomeric as well as dimeric form.

It is found in the secreted. Functionally, produced only during pregnancy and is involved in stimulating lactation, fetal growth and metabolism. Does not interact with GHR but only activates PRLR through zinc-induced dimerization. In Homo sapiens (Human), this protein is Chorionic somatomammotropin hormone 2 (CSH2).